The chain runs to 825 residues: Endoglucanase C (825 aa).

The first 28 residues, 1 to 28 (MRNKLRRLLAIMMAVLLITSLFAPMVSA), serve as a signal peptide directing secretion. The active-site Proton donor is glutamate 219. The active-site Nucleophile is glutamate 335. The span at 607–621 (DRESVPEPVEHDTKG) shows a compositional bias: basic and acidic residues. Residues 607–635 (DRESVPEPVEHDTKGDSALPSDFEDGTRQ) are disordered.

This sequence belongs to the glycosyl hydrolase 5 (cellulase A) family.

The enzyme catalyses Endohydrolysis of (1-&gt;4)-beta-D-glucosidic linkages in cellulose, lichenin and cereal beta-D-glucans.. The protein is Endoglucanase C (celC) of Evansella cellulosilytica (strain ATCC 21833 / DSM 2522 / FERM P-1141 / JCM 9156 / N-4) (Bacillus cellulosilyticus).